A 202-amino-acid chain; its full sequence is dITP/XTP pyrophosphatase (202 aa).

10-15 is a substrate binding site; it reads TSNRHK. Aspartate 70 acts as the Proton acceptor in catalysis. Residue aspartate 70 coordinates Mg(2+). Substrate is bound by residues serine 71, 153–156, lysine 176, and 181–182; these read FGYD and HR.

The protein belongs to the HAM1 NTPase family. Homodimer. Mg(2+) is required as a cofactor.

The catalysed reaction is XTP + H2O = XMP + diphosphate + H(+). It catalyses the reaction dITP + H2O = dIMP + diphosphate + H(+). The enzyme catalyses ITP + H2O = IMP + diphosphate + H(+). Pyrophosphatase that catalyzes the hydrolysis of nucleoside triphosphates to their monophosphate derivatives, with a high preference for the non-canonical purine nucleotides XTP (xanthosine triphosphate), dITP (deoxyinosine triphosphate) and ITP. Seems to function as a house-cleaning enzyme that removes non-canonical purine nucleotides from the nucleotide pool, thus preventing their incorporation into DNA/RNA and avoiding chromosomal lesions. The chain is dITP/XTP pyrophosphatase from Methylacidiphilum infernorum (isolate V4) (Methylokorus infernorum (strain V4)).